The sequence spans 432 residues: Amino-acid acetyltransferase (432 aa).

An N-acetyltransferase domain is found at 286-425; it reads ERVREAAIED…ASLYNYQRNS (140 aa).

It belongs to the acetyltransferase family. ArgA subfamily.

It localises to the cytoplasm. It carries out the reaction L-glutamate + acetyl-CoA = N-acetyl-L-glutamate + CoA + H(+). The protein operates within amino-acid biosynthesis; L-arginine biosynthesis; N(2)-acetyl-L-ornithine from L-glutamate: step 1/4. In Pseudomonas fluorescens (strain ATCC BAA-477 / NRRL B-23932 / Pf-5), this protein is Amino-acid acetyltransferase.